Consider the following 441-residue polypeptide: C4-dicarboxylate transport protein (441 aa).

Residues 1-30 (MIIEHSAEVRGKTPLYRHLYVQVLAAIAAG) are Cytoplasmic-facing. The chain crosses the membrane as a helical span at residues 31–49 (ILLGHFYPDIGTELKPLGD). Over 50 to 68 (AFIRLVKMIIAPVIFLTVA) the chain is Periplasmic. The helical transmembrane segment at 69–87 (TGIAGMTDLAKVGRVAGKA) threads the bilayer. Over 88–99 (MIYFLAFSTLAL) the chain is Cytoplasmic. Residues 100-118 (VVGLVVANVVQPGAGMHID) traverse the membrane as a helical segment. At 119–149 (PASLDAKAVATYAEKAHEQSITGFLMNIIPT) the chain is on the periplasmic side. A helical membrane pass occupies residues 150–168 (TLVGAFAEGDILQVLFISV). Over 169-171 (LFG) the chain is Cytoplasmic. Residues 172–190 (ISLAIVGKKAEPVVDFLQA) form a helical membrane-spanning segment. At 191 to 209 (LTLPIFRLVAILMKAAPIG) the chain is on the periplasmic side. The helical transmembrane segment at 210-228 (AFGAMAFTIGKYGIASIAN) threads the bilayer. The Cytoplasmic segment spans residues 229 to 241 (LAMLIGTFYLTSF). A helical membrane pass occupies residues 242–260 (LFVFIVLGAVARYNGFSIL). The Periplasmic segment spans residues 261 to 281 (SLIRYIKEELLLVLGTSSSEA). The helical transmembrane segment at 282-300 (ALPGLMNKMEKAGCKRSVV) threads the bilayer. The Cytoplasmic portion of the chain corresponds to 301–320 (GLVIPTGYSFNLDGTNIYMT). The chain crosses the membrane as a helical span at residues 321 to 339 (LAALFIAQATDTPLSYGDQ). Residues 340 to 350 (ILLLLVAMLSS) lie on the Periplasmic side of the membrane. Residues 351-369 (KGAAGITGAGFITLAATLS) form a helical membrane-spanning segment. Residues 370 to 378 (VVPSVPVAG) lie on the Cytoplasmic side of the membrane. Residues 379-398 (MALILGIDRFMSECRALTNF) form a helical membrane-spanning segment. At 399–405 (VGNAVAT) the chain is on the periplasmic side. A helical transmembrane segment spans residues 406 to 424 (IVVAKWEGELDQAQLSAAL). The Cytoplasmic portion of the chain corresponds to 425–441 (GGEASVEAIPAVVQPAE).

The protein belongs to the dicarboxylate/amino acid:cation symporter (DAACS) (TC 2.A.23) family.

The protein resides in the cell inner membrane. In terms of biological role, responsible for the transport of dicarboxylates such as succinate, fumarate, and malate from the periplasm across the inner membrane. This transport system plays an important role in the energy supply of rhizobium-legume symbionts. The chain is C4-dicarboxylate transport protein (dctA) from Rhizobium meliloti (strain 1021) (Ensifer meliloti).